Consider the following 85-residue polypeptide: MSDLSVFSRMAQSTGSRSVRLQVLSQMHQDMEQYVPKRAGFLRSQSFVNDTGVHYTAKYARAVLRLCKWPPGTNYSTPGTAADGI.

This is an uncharacterized protein from Lactococcus phage mv4 (Lactococcus delbrueckii bacteriophage mv4).